The sequence spans 409 residues: Accessory Sec system protein translocase subunit SecY2 (409 aa).

A run of 10 helical transmembrane segments spans residues 16–36, 61–81, 104–124, 132–152, 161–181, 190–210, 242–262, 286–306, 341–361, and 374–394; these read ILIT…PIPG, LSQV…MILL, VVML…FQYH, LLLA…IGNL, MTIL…PLIF, LAII…ITFE, GMAF…IILL, GVVI…FVNI, LFGT…LLFA, and TGIF…FQVI.

It belongs to the SecY/SEC61-alpha family. SecY2 subfamily. In terms of assembly, component of the accessory SecA2/SecY2 protein translocase complex required to export cell wall proteins. May form heterotrimers with SecE and SecG subunits.

It is found in the cell membrane. Part of the accessory SecA2/SecY2 system specifically required for export of possible cell wall proteins. The central subunit of a protein translocation channel. This Streptococcus agalactiae serotype Ia (strain ATCC 27591 / A909 / CDC SS700) protein is Accessory Sec system protein translocase subunit SecY2.